A 68-amino-acid chain; its full sequence is uncharacterized protein (68 aa).

The first 27 residues, 1–27 (MKGLLCFIYILSAILIGCVFLNKDVEA), serve as a signal peptide directing secretion.

This is an uncharacterized protein from Invertebrate iridescent virus 6 (IIV-6).